The following is a 168-amino-acid chain: MAKIADSIDSAQADSVENVESYSTETPESAAPAAPRPVLSVPGAAVGRRKEAIARVRLVPGAGAVTVNGRAFADYFPNKLHQQLITDPFKVLDLVGSYDVIARITGGGPSGQAGALRLAIARALNEIDRENNRPTLKKAGFLTRDARVTERKKAGLKKARKASQFSKR.

Residues 1–38 (MAKIADSIDSAQADSVENVESYSTETPESAAPAAPRPV) form a disordered region. Positions 9–22 (DSAQADSVENVESY) are enriched in polar residues. Residues 23-37 (STETPESAAPAAPRP) show a composition bias toward low complexity.

Belongs to the universal ribosomal protein uS9 family.

The protein is Small ribosomal subunit protein uS9 of Leifsonia xyli subsp. xyli (strain CTCB07).